Consider the following 126-residue polypeptide: MNFPDDLRYTSDHEWVKVLDDGKVRVGITDFAQSELGDIVFVETKPVGTVLKQQDIFGTVEAVKTVADLFAPVTGKINAVNDALDAAEIVNSSPYDEGWMIEIIVDDPEQVNALMTVQEYKKTVGE.

A Lipoyl-binding domain is found at 23-104 (KVRVGITDFA…YDEGWMIEII (82 aa)). Position 64 is an N6-lipoyllysine (lysine 64).

This sequence belongs to the GcvH family. As to quaternary structure, the glycine cleavage system is composed of four proteins: P, T, L and H. The cofactor is (R)-lipoate.

Functionally, the glycine cleavage system catalyzes the degradation of glycine. The H protein shuttles the methylamine group of glycine from the P protein to the T protein. The sequence is that of Glycine cleavage system H protein from Chlorobium phaeobacteroides (strain BS1).